The primary structure comprises 328 residues: RING finger protein 175 (328 aa).

Transmembrane regions (helical) follow at residues 51–71 (MHVE…IVLV), 83–103 (LVTL…LYWW), 104–121 (RFLS…YILF), 149–169 (AFGV…NLFF), and 180–200 (GIVS…FAEI). An RING-type; atypical zinc finger spans residues 227–277 (CAVCGQKIIVELDEEGLIENTYQLSCNHVFHEFCIRGWCIVGKKQTCPYCK).

Its subcellular location is the membrane. The sequence is that of RING finger protein 175 (RNF175) from Homo sapiens (Human).